The chain runs to 185 residues: MAPIKSRRIAVLGSRSVGKSSLTVQYVENHFVESYYPTIENTFSKNIKYKGQEFATEIIDTAGQDEYSILNSKHSIGIHGYVLVYSITSKSSFEMVKIVRDKILNHTGTEWVPIVVVGNKSDLHMQRAVTAEEGKALANEWKCAWTEASARHNENVARAFELIISEIEKQANPSPPGDGKGCVIA.

11 residues coordinate GTP: Ser16, Gly18, Lys19, Ser20, Ser21, Val32, Tyr35, Thr38, Asn119, Asp122, and Ala150. Residue Ser20 participates in Mg(2+) binding. The Effector region signature appears at 35–43; it reads YYPTIENTF. Position 38 (Thr38) interacts with Mg(2+). A Cysteine methyl ester modification is found at Cys182. Residue Cys182 is the site of S-farnesyl cysteine attachment. Positions 183-185 are cleaved as a propeptide — removed in mature form; the sequence is VIA.

The protein belongs to the small GTPase superfamily. Rheb family.

The protein localises to the cell membrane. The catalysed reaction is GTP + H2O = GDP + phosphate + H(+). Functionally, binds GTP and exhibits intrinsic GTPase activity. Regulates entry into stationary phase when extracellular nitrogen levels are adequate for growth. This is GTP-binding protein rhb1 (rhb1) from Schizosaccharomyces pombe (strain 972 / ATCC 24843) (Fission yeast).